The chain runs to 77 residues: Small, acid-soluble spore protein Tlp (77 aa).

The protein belongs to the Tlp family.

It localises to the spore core. The sequence is that of Small, acid-soluble spore protein Tlp from Geobacillus sp. (strain WCH70).